Reading from the N-terminus, the 146-residue chain is UPF0178 protein Lin1493 (146 aa).

Belongs to the UPF0178 family.

The protein is UPF0178 protein Lin1493 of Listeria innocua serovar 6a (strain ATCC BAA-680 / CLIP 11262).